Consider the following 325-residue polypeptide: Diacylglycerol acyltransferase/mycolyltransferase Ag85B (325 aa).

A signal peptide spans 1–40 (MTDVSGKIRAWGRRLLVGAAAAAALPGLVGLAGGAATAGA). 82 to 83 (LR) lines the substrate pocket. A fibronectin-binding region spans residues 98 to 108 (FEWYYQSGLSV). C127 and C132 are joined by a disulfide. S166 and D194 together coordinate substrate. Residue S166 is the Nucleophile of the active site. Residue E270 is part of the active site. Substrate is bound by residues 272 to 275 (FVRS), K279, and 302 to 304 (HSW). H302 is a catalytic residue.

This sequence belongs to the mycobacterial A85 antigen family.

The protein resides in the secreted. The enzyme catalyses 2 alpha,alpha'-trehalose 6-mycolate = alpha,alpha'-trehalose 6,6'-bismycolate + alpha,alpha-trehalose. It catalyses the reaction an acyl-CoA + a 1,2-diacyl-sn-glycerol = a triacyl-sn-glycerol + CoA. Its function is as follows. The antigen 85 proteins (FbpA, FbpB, FbpC) are responsible for the high affinity of mycobacteria for fibronectin, a large adhesive glycoprotein, which facilitates the attachment of M.tuberculosis to murine alveolar macrophages (AMs). They also help to maintain the integrity of the cell wall by catalyzing the transfer of mycolic acids to cell wall arabinogalactan and through the synthesis of alpha,alpha-trehalose dimycolate (TDM, cord factor). They catalyze the transfer of a mycoloyl residue from one molecule of alpha,alpha-trehalose monomycolate (TMM) to another TMM, leading to the formation of TDM. The protein is Diacylglycerol acyltransferase/mycolyltransferase Ag85B (fbpB) of Mycobacterium kansasii.